Consider the following 213-residue polypeptide: Orotate phosphoribosyltransferase (213 aa).

K26 serves as a coordination point for 5-phospho-alpha-D-ribose 1-diphosphate. Residue 34–35 (FF) coordinates orotate. Residues 72–73 (YK), R99, K100, K103, H105, and 124–132 (DDVITAGTA) each bind 5-phospho-alpha-D-ribose 1-diphosphate. 2 residues coordinate orotate: T128 and R156.

The protein belongs to the purine/pyrimidine phosphoribosyltransferase family. PyrE subfamily. Homodimer. Mg(2+) is required as a cofactor.

It carries out the reaction orotidine 5'-phosphate + diphosphate = orotate + 5-phospho-alpha-D-ribose 1-diphosphate. Its pathway is pyrimidine metabolism; UMP biosynthesis via de novo pathway; UMP from orotate: step 1/2. In terms of biological role, catalyzes the transfer of a ribosyl phosphate group from 5-phosphoribose 1-diphosphate to orotate, leading to the formation of orotidine monophosphate (OMP). This is Orotate phosphoribosyltransferase from Saccharophagus degradans (strain 2-40 / ATCC 43961 / DSM 17024).